Consider the following 600-residue polypeptide: Aspartate--tRNA(Asp/Asn) ligase (600 aa).

Glu-187 lines the L-aspartate pocket. Positions Gln-211–Lys-214 are aspartate. Positions 233 and 463 each coordinate L-aspartate. Arg-233–Glu-235 lines the ATP pocket. Position 497 (Glu-497) interacts with ATP. Arg-504 is a binding site for L-aspartate. Residue Gly-549–Arg-552 participates in ATP binding.

It belongs to the class-II aminoacyl-tRNA synthetase family. Type 1 subfamily. In terms of assembly, homodimer.

It localises to the cytoplasm. The catalysed reaction is tRNA(Asx) + L-aspartate + ATP = L-aspartyl-tRNA(Asx) + AMP + diphosphate. Aspartyl-tRNA synthetase with relaxed tRNA specificity since it is able to aspartylate not only its cognate tRNA(Asp) but also tRNA(Asn). Reaction proceeds in two steps: L-aspartate is first activated by ATP to form Asp-AMP and then transferred to the acceptor end of tRNA(Asp/Asn). In Wolbachia sp. subsp. Drosophila simulans (strain wRi), this protein is Aspartate--tRNA(Asp/Asn) ligase.